Reading from the N-terminus, the 274-residue chain is Sulfur carrier protein FdhD (274 aa).

Catalysis depends on C121, which acts as the Cysteine persulfide intermediate. 258-263 lines the Mo-bis(molybdopterin guanine dinucleotide) pocket; it reads FSKPGR.

This sequence belongs to the FdhD family.

It is found in the cytoplasm. In terms of biological role, required for formate dehydrogenase (FDH) activity. Acts as a sulfur carrier protein that transfers sulfur from IscS to the molybdenum cofactor prior to its insertion into FDH. The sequence is that of Sulfur carrier protein FdhD from Yersinia pseudotuberculosis serotype O:1b (strain IP 31758).